Reading from the N-terminus, the 65-residue chain is Large ribosomal subunit protein bL35 (65 aa).

Residues 1 to 26 (MPKMKTHRGAAKRFKKTGSGKLKRAK) form a disordered region.

It belongs to the bacterial ribosomal protein bL35 family.

This chain is Large ribosomal subunit protein bL35, found in Clostridium novyi (strain NT).